The following is a 61-amino-acid chain: Large ribosomal subunit protein uL29 (61 aa).

This sequence belongs to the universal ribosomal protein uL29 family.

The protein is Large ribosomal subunit protein uL29 of Stenotrophomonas maltophilia (strain R551-3).